We begin with the raw amino-acid sequence, 457 residues long: Argininosuccinate lyase (457 aa).

The protein belongs to the lyase 1 family. Argininosuccinate lyase subfamily.

The protein localises to the cytoplasm. It carries out the reaction 2-(N(omega)-L-arginino)succinate = fumarate + L-arginine. The protein operates within amino-acid biosynthesis; L-arginine biosynthesis; L-arginine from L-ornithine and carbamoyl phosphate: step 3/3. This is Argininosuccinate lyase from Exiguobacterium sibiricum (strain DSM 17290 / CCUG 55495 / CIP 109462 / JCM 13490 / 255-15).